A 477-amino-acid chain; its full sequence is Ribulose bisphosphate carboxylase large chain (477 aa).

Residues 1–2 (MS) constitute a propeptide that is removed on maturation. Residue Pro-3 is modified to N-acetylproline. The substrate site is built by Asn-123 and Thr-173. The active-site Proton acceptor is Lys-175. A substrate-binding site is contributed by Lys-177. The Mg(2+) site is built by Lys-201, Asp-203, and Glu-204. At Lys-201 the chain carries N6-carboxylysine. The active-site Proton acceptor is His-294. Residues Arg-295, His-327, and Ser-379 each contribute to the substrate site.

Belongs to the RuBisCO large chain family. Type I subfamily. As to quaternary structure, heterohexadecamer of 8 large chains and 8 small chains; disulfide-linked. The disulfide link is formed within the large subunit homodimers. Mg(2+) serves as cofactor. In terms of processing, the disulfide bond which can form in the large chain dimeric partners within the hexadecamer appears to be associated with oxidative stress and protein turnover.

The protein localises to the plastid. Its subcellular location is the chloroplast. It carries out the reaction 2 (2R)-3-phosphoglycerate + 2 H(+) = D-ribulose 1,5-bisphosphate + CO2 + H2O. It catalyses the reaction D-ribulose 1,5-bisphosphate + O2 = 2-phosphoglycolate + (2R)-3-phosphoglycerate + 2 H(+). In terms of biological role, ruBisCO catalyzes two reactions: the carboxylation of D-ribulose 1,5-bisphosphate, the primary event in carbon dioxide fixation, as well as the oxidative fragmentation of the pentose substrate in the photorespiration process. Both reactions occur simultaneously and in competition at the same active site. The polypeptide is Ribulose bisphosphate carboxylase large chain (Lolium perenne (Perennial ryegrass)).